The primary structure comprises 367 residues: Probable glutamine synthetase (367 aa).

Residues 30–110 (IQATYVWIDG…VMCDTLDHQM (81 aa)) form the GS beta-grasp domain. A GS catalytic domain is found at 117 to 367 (HRQACAEIMH…TAMIAQSILF (251 aa)).

The protein belongs to the glutamine synthetase family. In terms of assembly, homooctamer.

Its subcellular location is the cytoplasm. It carries out the reaction L-glutamate + NH4(+) + ATP = L-glutamine + ADP + phosphate + H(+). The polypeptide is Probable glutamine synthetase (gln-2) (Caenorhabditis elegans).